Reading from the N-terminus, the 454-residue chain is MAPQLLLCLILTFLWSLPEAESNVFLKSKEANRFLQRTKRSNSLFEEFRPGNIERECIEEKCSKEEAREIFKDNEKTEAFWNVYVDGDQCSSNPCHYGGTCKDGIGSYTCTCLPNYEGKNCEHLLFKSCRFFNGNCWHFCKPVQNDTQCSCAESYRLGDDGHSCVAEGDFSCGRNIKARNKREASLPDFVQSQNATLLKKSDNPSPDIRIINGMDCKLGECPWQAVLLDKEGDVFCGGTILSPIYVLTAAHCITQSKHISVVVGEIDISRKETRHLLSVDKAYVHTKFVLATYDYDIAIIQLKTPIQFSENVVPACLPTADFANQVLMKQDFGIISGFGHTRSGGQTSNTLKVVTIPYVDRHTCMLSSDFRITPNMFCAGYDTLPRDACQGDSGGPHITAYRDTHFITGIISWGEGCAKKGKYGVYTKVSNFIPWIKAVMRKHQPSTESSTGRL.

An N-terminal signal peptide occupies residues 1–20 (MAPQLLLCLILTFLWSLPEA). Residues 21–40 (ESNVFLKSKEANRFLQRTKR) constitute a propeptide that is removed on maturation. The Gla domain maps to 41-86 (SNSLFEEFRPGNIERECIEEKCSKEEAREIFKDNEKTEAFWNVYVD). 4-carboxyglutamate occurs at positions 46, 47, 54, 56, 59, 60, 65, 66, 69, and 75. A disulfide bridge connects residues C57 and C62. Residues 86–122 (DGDQCSSNPCHYGGTCKDGIGSYTCTCLPNYEGKNCE) form the EGF-like 1; calcium-binding domain. Cystine bridges form between C90/C101, C95/C110, C112/C121, C129/C140, C136/C149, C151/C164, C172/C316, C216/C221, C236/C252, C364/C378, and C389/C417. S92 is a glycosylation site (O-linked (Hex...) serine). Positions 129-164 (CRFFNGNCWHFCKPVQNDTQCSCAESYRLGDDGHSC) constitute an EGF-like 2 domain. The propeptide at 182–209 (REASLPDFVQSQNATLLKKSDNPSPDIR) is activation peptide. Positions 210-441 (IINGMDCKLG…FIPWIKAVMR (232 aa)) constitute a Peptidase S1 domain. Active-site charge relay system residues include H251 and D296. S393 functions as the Charge relay system in the catalytic mechanism.

Belongs to the peptidase S1 family. Snake venom subfamily. In terms of assembly, heterodimer of a light chain and a heavy chain; disulfide-linked. In terms of processing, the vitamin K-dependent, enzymatic carboxylation of some glutamate residues allows the modified protein to bind calcium. As to expression, expressed by the venom gland.

The protein resides in the secreted. The catalysed reaction is Selective cleavage of Arg-|-Thr and then Arg-|-Ile bonds in prothrombin to form thrombin.. Functionally, snake prothrombin activator that attacks the hemostatic system of prey. This protein is functionally similar to blood coagulation factor Xa. This is Venom prothrombin activator porpharin-D from Pseudechis porphyriacus (Red-bellied black snake).